Reading from the N-terminus, the 298-residue chain is Syntaxin-4 (298 aa).

At 1-274 (MRDRTHELRQ…NQKKARKKKV (274 aa)) the chain is on the cytoplasmic side. A phosphoserine mark is found at Ser15, Ser29, Ser35, Ser36, Ser117, Ser208, and Ser248. Residues 38 to 163 (DDEFFQKVQT…ERIRRQLKIT (126 aa)) adopt a coiled-coil conformation. Positions 154–298 (ERIRRQLKIT…VIIGITITVG (145 aa)) are interaction with CENPF. Positions 200–262 (LNEISARHSE…ERGQEHVKIA (63 aa)) constitute a t-SNARE coiled-coil homology domain. The helical; Anchor for type IV membrane protein transmembrane segment at 275 to 295 (MIAICVSVTVLILAVIIGITI) threads the bilayer. At 296 to 298 (TVG) the chain is on the extracellular side.

The protein belongs to the syntaxin family. In terms of assembly, found in a complex with VAMP8 and SNAP23. Detected in a complex with SNAP23 and STXBP4. Interacts with SNAP23 and SNAPIN. Interacts with VAMP2. Interacts with LLGL1. Interacts (via C-terminus) with CENPF. Interacts with DOC2B. Interacts with STXBP3; excludes interaction with DOC2B and SNAP25. Interacts with STXBP4; excludes interaction with VAMP2. Component of the SNARE complex composed of STX4, SNAP23 and VAMP7 that interacts with SYT7 during lysosomal exocytosis. Interacts with STXBP6. Interacts with STXBP5L. In terms of tissue distribution, expressed in all tissues tested including adipose, brain, testis, intestine, liver, heart, spleen, skeletal muscle and kidney.

The protein resides in the cell membrane. It is found in the cell projection. Its subcellular location is the neuron projection. The protein localises to the stereocilium. In terms of biological role, plasma membrane t-SNARE that mediates docking of transport vesicles. Necessary for the translocation of SLC2A4 from intracellular vesicles to the plasma membrane. In neurons, recruited at neurite tips to membrane domains rich in the phospholipid 1-oleoyl-2-palmitoyl-PC (OPPC) which promotes neurite tip surface expression of the dopamine transporter SLC6A3/DAT by facilitating fusion of SLC6A3-containing transport vesicles with the plasma membrane. Together with STXB3 and VAMP2, may also play a role in docking/fusion of intracellular GLUT4-containing vesicles with the cell surface in adipocytes and in docking of synaptic vesicles at presynaptic active zones. Required for normal hearing. This is Syntaxin-4 (Stx4) from Rattus norvegicus (Rat).